The following is a 102-amino-acid chain: Biotrophy-associated secreted protein 2 (102 aa).

Positions 1 to 19 (MVRVSTFAAILAMALSVTA) are cleaved as a signal peptide. Residue asparagine 46 is glycosylated (N-linked (GlcNAc...) asparagine).

It is found in the secreted. In terms of biological role, secreted effector involved in biotrophic colonization of plant cells. This chain is Biotrophy-associated secreted protein 2, found in Pyricularia oryzae (strain 70-15 / ATCC MYA-4617 / FGSC 8958) (Rice blast fungus).